A 340-amino-acid polypeptide reads, in one-letter code: tRNA dimethylallyltransferase (340 aa).

The tract at residues 1-25 is disordered; it reads MDQNRSPNGRDCREPPSPSSTARPG. 31-38 is an ATP binding site; sequence GPTATGKS. 33–38 lines the substrate pocket; it reads TATGKS. The interaction with substrate tRNA stretch occupies residues 56–59; sequence DSRQ.

The protein belongs to the IPP transferase family. Monomer. The cofactor is Mg(2+).

The enzyme catalyses adenosine(37) in tRNA + dimethylallyl diphosphate = N(6)-dimethylallyladenosine(37) in tRNA + diphosphate. Catalyzes the transfer of a dimethylallyl group onto the adenine at position 37 in tRNAs that read codons beginning with uridine, leading to the formation of N6-(dimethylallyl)adenosine (i(6)A). This is tRNA dimethylallyltransferase from Synechococcus sp. (strain JA-3-3Ab) (Cyanobacteria bacterium Yellowstone A-Prime).